The sequence spans 371 residues: Transaldolase (371 aa).

Catalysis depends on lysine 140, which acts as the Schiff-base intermediate with substrate.

It belongs to the transaldolase family. Type 2 subfamily.

Its subcellular location is the cytoplasm. It carries out the reaction D-sedoheptulose 7-phosphate + D-glyceraldehyde 3-phosphate = D-erythrose 4-phosphate + beta-D-fructose 6-phosphate. It participates in carbohydrate degradation; pentose phosphate pathway; D-glyceraldehyde 3-phosphate and beta-D-fructose 6-phosphate from D-ribose 5-phosphate and D-xylulose 5-phosphate (non-oxidative stage): step 2/3. Its function is as follows. Transaldolase is important for the balance of metabolites in the pentose-phosphate pathway. The chain is Transaldolase from Frankia alni (strain DSM 45986 / CECT 9034 / ACN14a).